We begin with the raw amino-acid sequence, 351 residues long: Peptide chain release factor 1 (351 aa).

The residue at position 229 (glutamine 229) is an N5-methylglutamine.

The protein belongs to the prokaryotic/mitochondrial release factor family. Methylated by PrmC. Methylation increases the termination efficiency of RF1.

It is found in the cytoplasm. Its function is as follows. Peptide chain release factor 1 directs the termination of translation in response to the peptide chain termination codons UAG and UAA. This Cereibacter sphaeroides (strain ATCC 17025 / ATH 2.4.3) (Rhodobacter sphaeroides) protein is Peptide chain release factor 1.